The chain runs to 313 residues: Synaptophysin (313 aa).

Residues 1–25 (MLLLADMDVVNQLVAGGQFRVVKEP) lie on the Cytoplasmic side of the membrane. Residues 21 to 227 (VVKEPLGFVK…NLWFVFKETG (207 aa)) form the MARVEL domain. The helical transmembrane segment at 26-49 (LGFVKVLQWVFAIFAFATCGSYSG) threads the bilayer. Topologically, residues 50–106 (ELQLSVDCANKTKSDLNIEVEFEYPFRLHEVYFEAPTCQGDPKKIFLVGNYSSSAEF) are vesicular. N59 is a glycosylation site (N-linked (GlcNAc...) asparagine). At Y81 the chain carries Phosphotyrosine. N-linked (GlcNAc...) asparagine glycosylation is present at N99. The helical transmembrane segment at 107 to 130 (FVTVAVFAFLYSMGALATYIFLQN) threads the bilayer. Over 131-137 (KYRENNK) the chain is Cytoplasmic. Residues 138 to 161 (GPMLDFLATAVFAFMWLVSSSAWA) traverse the membrane as a helical segment. Over 162–199 (KGLSDVKMATDPENIIKGMHVCHQPGNTCKELRDPVTS) the chain is Vesicular. The helical transmembrane segment at 200 to 223 (GLNTSVVFGFLNLVLWVGNLWFVF) threads the bilayer. The Cytoplasmic segment spans residues 224-313 (KETGWAAPFL…GAPTSFSNQM (90 aa)). The interval 238–313 (GAPEKQPAPG…GAPTSFSNQM (76 aa)) is disordered. Over residues 253–263 (AGYGQGPGGYG) the composition is skewed to gly residues. The segment at 254–304 (GYGQGPGGYGPQDSYGPQGGYQPDYGQPASSGGGGYGPQGDYGQQGYGPQG) is repeats, Gly/Tyr-rich. Residues 264–283 (PQDSYGPQGGYQPDYGQPAS) are compositionally biased toward low complexity. Residues 284–302 (SGGGGYGPQGDYGQQGYGP) show a composition bias toward gly residues.

The protein belongs to the synaptophysin/synaptobrevin family. Homohexamer or homotetramer. Interacts with SRCIN1. Interacts with VAMP2; the interaction is inhibited by interaction of VAPM2 with SEPT8. Ubiquitinated; mediated by SIAH1 or SIAH2 and leading to its subsequent proteasomal degradation. Post-translationally, phosphorylated by SRC. Characteristic of a type of small (30-80 nm) neurosecretory vesicles, including presynaptic vesicles, but also vesicles of various neuroendocrine cells of both neuronal and epithelial phenotype.

Its subcellular location is the cytoplasmic vesicle. It is found in the secretory vesicle. The protein localises to the synaptic vesicle membrane. The protein resides in the synapse. It localises to the synaptosome. In terms of biological role, possibly involved in structural functions as organizing other membrane components or in targeting the vesicles to the plasma membrane. Involved in the regulation of short-term and long-term synaptic plasticity. This Bos taurus (Bovine) protein is Synaptophysin (SYP).